A 135-amino-acid chain; its full sequence is Large ribosomal subunit protein uL16c (135 aa).

The protein belongs to the universal ribosomal protein uL16 family. As to quaternary structure, part of the 50S ribosomal subunit.

It localises to the plastid. Its subcellular location is the chloroplast. In Piper cenocladum (Ant piper), this protein is Large ribosomal subunit protein uL16c.